Here is a 993-residue protein sequence, read N- to C-terminus: MDQSVAIQETLVEGEYCVIAVQGVLCKGDSRQSRLLGLVRYRLENDAQEHALFLYTHRRMAITGDDVSLDQIVPLSKDFMLEEVSPDGELYILGSDVTVQLNTAELKLVFQLPFGSHTRTFLQEVARACPGFDPETRDPEFEWLSRHTCAEPDAESPKPREWNSDPGTRSGFAPIGGSRHQSRNARRGLEDVLPRGPGYILLWGGAAEEPEFLLAEEMHEGGPVRGRRPLAGRRDEALEEADWEMSAGGGSRERDCAGVSNVDSSRPNGRGPDQPSGARCPEKPENSLTRQNKSKSDMSEKVRSATVTVSDKAHILSVQKFGLRDTIVRSHLVQKEENYTYIQNFRFFVGTYNVNGQSPKECLRPWLSHSALAPDVYCVGFQELDLSKEAFFFHDTPKEEEWFKAVSESLHPDAKYAKVKFVRLVGIMLLLYVKQEHAAYISEVEAETVGTGIMGRMGNKGGVAIRFQLHNTSICVVNSHLAAHTEEYERRNQDYRDICSRMQFPQVDPSQPPLTINKHDVILWLGDLNYRIEELDVGKVKKLVEEKAFQTLYAHDQLKIQVAARTIFDGFTEGEITFQPTYKYDTGSDDWDTSEKCRAPAWCDRILWKGKNITQLSYQSHMALKTSDHKPVSSVFDIGVRVVNEELYRKTLEEIVRSLDKMENANIPSVTLSKREFCFENVKYMQLQTESFTIHNSQVPCQFEFINKPDEESYCKQWLTARPSKGFLLPDSHVEIELELFVNKSTATKLNSGKDTIEDILVLHLERGKDYFLSVSGNYLPSCFGSPIHTLCYMREPILDLPLKTVSDLTLMSVQTADDRSQLENPMEIPKELWMMVDYLYRNAVQQEDLFQQPGLRPEFDHIRDCLDTGMIDQLCANNHSVAEALLLFLESLPEPVICYSAYHSCLECSGNYAASKQIILTLPSFHKNVFNYLMAFLQELLKNSANNHLDENILASIFGSLLLRNPARHQKLDMAEKKKAQEFIHQFLCGPL.

The region spanning 22–148 (QGVLCKGDSR…PEFEWLSRHT (127 aa)) is the PH domain. Basic and acidic residues-rich tracts occupy residues 149–163 (CAEP…REWN) and 294–303 (SKSDMSEKVR). Disordered regions lie at residues 149–191 (CAEP…GLED) and 236–304 (EALE…KVRS). The tract at residues 342 to 668 (IQNFRFFVGT…LDKMENANIP (327 aa)) is 5-phosphatase. Mg(2+) contacts are provided by N355 and E383. Residues E383, 459–460 (NK), 582–583 (YK), and 596–598 (KCR) contribute to the substrate site. The segment at 669–782 (SVTLSKREFC…LSVSGNYLPS (114 aa)) is ASH. Positions 821–993 (SQLENPMEIP…FIHQFLCGPL (173 aa)) constitute a Rho-GAP domain. C990 carries the post-translational modification Cysteine methyl ester. C990 carries the S-farnesyl cysteine lipid modification. Positions 991–993 (GPL) are cleaved as a propeptide — removed in mature form.

It belongs to the inositol 1,4,5-trisphosphate 5-phosphatase type II family. Interacts with APPL1, PHETA1 and PHETA2. Interacts with several Rab GTPases, at least RAB1A, RAB2A, RAB5A, RAB6A, RAB8A, RAB9A and RAB33B; these interactions may play a dual role in targeting INPP5B to the specific membranes and stimulating its phosphatase activity. Interacts preferentially with non-phosphorylated RAB8A; phosphorylation of RAB8A on 'Thr-72' disrupts this interaction. Interacts with INPP5F. Isoprenylation at Cys-990 may be required for localization at the membrane. In terms of processing, may be proteolytically cleaved after Lys-320 as inferred from N-terminal protein sequence of the 75 kda form. As to expression, detected in kidney, liver, brain, lung and testis (at protein level). Detected in kidney and liver, and at lower levels in brain, lung and testis.

Its subcellular location is the cytoplasm. It is found in the cytosol. The protein resides in the endoplasmic reticulum-Golgi intermediate compartment. It localises to the early endosome membrane. The protein localises to the membrane. Its subcellular location is the cytoplasmic vesicle. It is found in the phagosome membrane. The catalysed reaction is a 1,2-diacyl-sn-glycero-3-phospho-(1D-myo-inositol-4,5-bisphosphate) + H2O = a 1,2-diacyl-sn-glycero-3-phospho-(1D-myo-inositol 4-phosphate) + phosphate. Hydrolyzes phosphatidylinositol 4,5-bisphosphate (PtIns(4,5)P2) and the signaling molecule phosphatidylinositol 1,4,5-trisphosphate (PtIns(1,4,5)P3), and thereby modulates cellular signaling events. The polypeptide is Type II inositol 1,4,5-trisphosphate 5-phosphatase (Inpp5b) (Mus musculus (Mouse)).